Reading from the N-terminus, the 326-residue chain is UDP-N-acetylglucosamine transporter (326 aa).

The next 8 membrane-spanning stretches (helical) occupy residues 4-24, 38-58, 136-156, 174-194, 212-232, 243-263, 269-289, and 293-313; these read NLKY…VLTM, LSST…IFLV, LGVY…FVQW, FVGL…GVYF, LGFF…GELV, QLTW…AAVI, ILKG…SYFW, and FVPT…TFLY.

Belongs to the nucleotide-sugar transporter family. SLC35A subfamily. Interacts with SLC35A2; the interaction is reduced in the presence of SLC35A4. Found in a complex with SLC35A2 and SLC35A4. Interacts with MGAT4B. In terms of processing, O-Glcnacylation regulates the stability of SLC35A3 and the specific complex formation with MGAT4B.

It is found in the golgi apparatus membrane. It carries out the reaction UMP(out) + UDP-N-acetyl-alpha-D-glucosamine(in) = UMP(in) + UDP-N-acetyl-alpha-D-glucosamine(out). Its function is as follows. Transports diphosphate-N-acetylglucosamine (UDP-GlcNAc) from the cytosol into the lumen of the Golgi apparatus, functioning as an antiporter that exchanges UDP-N-acetyl-alpha-D-glucosamine for UMP. May supply UDP-GlcNAc as substrate for Golgi-resident glycosyltransferases that generate highly branched, multiantennary complex N-glycans and keratan sulfate. However, the exact role of SLC35A3 still needs to be elucidated, it could be a member of a catalytically more efficient multiprotein complex rather than function independently as a single transporter. The chain is UDP-N-acetylglucosamine transporter (Slc35a3) from Mus musculus (Mouse).